The chain runs to 205 residues: Large ribosomal subunit protein bL25 (205 aa).

Belongs to the bacterial ribosomal protein bL25 family. CTC subfamily. As to quaternary structure, part of the 50S ribosomal subunit; part of the 5S rRNA/L5/L18/L25 subcomplex. Contacts the 5S rRNA. Binds to the 5S rRNA independently of L5 and L18.

Its function is as follows. This is one of the proteins that binds to the 5S RNA in the ribosome where it forms part of the central protuberance. The chain is Large ribosomal subunit protein bL25 from Bartonella bacilliformis (strain ATCC 35685 / KC583 / Herrer 020/F12,63).